The sequence spans 65 residues: KEGYPVGRDGCKISCVINNNFCKVECQAKWRQSDGYCYFWGLSCYCTNLPDDAQVWDSSTNKCGG.

Residues 1-64 enclose the LCN-type CS-alpha/beta domain; it reads KEGYPVGRDG…VWDSSTNKCG (64 aa). Intrachain disulfides connect C11–C63, C15–C37, C22–C44, and C26–C46.

Belongs to the long (4 C-C) scorpion toxin superfamily. Sodium channel inhibitor family. Beta subfamily. In terms of tissue distribution, expressed by the venom gland.

Its subcellular location is the secreted. In terms of biological role, beta toxins bind voltage-independently at site-4 of sodium channels (Nav) and shift the voltage of activation toward more negative potentials thereby affecting sodium channel activation and promoting spontaneous and repetitive firing. This is Putative beta-neurotoxin RjAa7 from Rhopalurus junceus (Caribbean blue scorpion).